A 521-amino-acid chain; its full sequence is Ribonuclease Y (521 aa).

Residues 10–30 traverse the membrane as a helical segment; it reads LIITAGVSIALAIVAFFLGYL. The 61-residue stretch at 210-270 folds into the KH domain; it reads TVSVVTLPND…IRREIAKLTL (61 aa). Residues 336-430 enclose the HD domain; that stretch reads VLAHSIEVAN…IQAADSVSAA (95 aa).

The protein belongs to the RNase Y family.

It is found in the cell membrane. In terms of biological role, endoribonuclease that initiates mRNA decay. This is Ribonuclease Y from Caldicellulosiruptor saccharolyticus (strain ATCC 43494 / DSM 8903 / Tp8T 6331).